The sequence spans 84 residues: MILFQRIILQRLNQATADDLLKYSKQYGISLTRSQAVEVANLLYGKNVNIFNESERMRLLKQVETITSKETAQTVNELFKQFTS.

This is an uncharacterized protein from Bacillus subtilis (strain 168).